A 1342-amino-acid chain; its full sequence is MVYSYTEKKRIRKDFGKRPQVLDVPYLLSIQLDSFQKFIEQDPEGQYGLEAAFRSVFPIQSYSGNSELQYVSYRLGEPVFDVQECQIRGVTYSAPLRVKLRLVIYEREAPEGTVKDIKEQEVYMGEIPLMTDNGTFVINGTERVIVSQLHRSPGVFFDSDKGKTHSSGKVLYNARIIPYRGSWLDFEFDPKDNLFVRIDRRRKLPATIILRALNYTTEQILDLFFEKVIFEIRDNKLQMELVPERLRGETASFDIEANGKVYVEKGRRITARHIRQLEKDDVKLIEVPVEYIAGKVVAKDYIDESTGELICAANMELSLDLLAKLSQSGHKRIETLFTNDLDHGPYISETLRVDPTNDRLSALVEIYRMMRPGEPPTREAAESLFENLFFSEDRYDLSAVGRMKFNRSLLREEIEGSGILSKDDIIDVMKKLIDIRNGKGEVDDIDHLGNRRIRSVGEMAENQFRVGLVRVERAVKERLSLGDLDTLMPQDMINAKPISAAVKEFFGSSQLSQFMDQNNPLSEITHKRRISALGPGGLTRERAGFEVRDVHPTHYGRVCPIETPEGPNIGLINSLSVYAQTNEYGFLETPYRKVTDGVVTDEIHYLSAIEEGNYVIAQANSNLDEEGHFVEDLVTCRSKGESSLFSRDQVDYMDVSTQQVVSVGASLIPFLEHDDANRALMGANMQRQAVPTLRADKPLVGTGMERAVAVDSGVTAVAKRGGVVQYVDASRIVIKVNEDEMYPGEAGIDIYNLTKYTRSNQNTCINQMPCVSLGEPVERGDVLADGPSTDLGELALGQNMRVAFMPWNGYNFEDSILVSERVVQEDRFTTIHIQELACVSRDTKLGPEEITADIPNVGEAALSKLDESGIVYIGAEVTGGDILVGKVTPKGETQLTPEEKLLRAIFGEKASDVKDSSLRVPNGVSGTVIDVQVFTRDGVEKDKRALEIEEMQLKQAKKDLSEELQILEAGLFSRIRAVLVAGGVEAEKLDKLPRDRWLELGLTDEEKQNQLEQLAEQYDELKHEFEKKLEAKRRKITQGDDLAPGVLKIVKVYLAVKRRIQPGDKMAGRHGNKGVISKINPIEDMPYDENGTPVDIVLNPLGVPSRMNIGQILETHLGMAAKGIGDKINAMLKQQQEVAKLREFIQRAYDLGADVRQKVDLSTFSDEEVMRLAENLRKGMPIATPVFDGAKEAEIKELLKLGDLPTSGQIRLYDGRTGEQFERPVTVGYMYMLKLNHLVDDKMHARSTGSYSLVTQQPLGGKAQFGGQRFGEMEVWALEAYGAAYTLQEMLTVKSDDVNGRTKMYKNIVDGNHQMEPGMPESFNVLLKEIRSLGINIELEDE.

N6-acetyllysine occurs at positions 1022 and 1200.

It belongs to the RNA polymerase beta chain family. In terms of assembly, the RNAP catalytic core consists of 2 alpha, 1 beta, 1 beta' and 1 omega subunit. When a sigma factor is associated with the core the holoenzyme is formed, which can initiate transcription.

The enzyme catalyses RNA(n) + a ribonucleoside 5'-triphosphate = RNA(n+1) + diphosphate. Its function is as follows. DNA-dependent RNA polymerase catalyzes the transcription of DNA into RNA using the four ribonucleoside triphosphates as substrates. This is DNA-directed RNA polymerase subunit beta from Escherichia coli O139:H28 (strain E24377A / ETEC).